A 459-amino-acid chain; its full sequence is Chromosomal replication initiator protein DnaA (459 aa).

The interval 1-74 is domain I, interacts with DnaA modulators; sequence MMEMPIDNLW…ANVVQSILGH (74 aa). The interval 74 to 117 is domain II; that stretch reads HPVEIYITVAKGEEFEEIGGGGEWELPTTNIINETPNQNRQPNT. A domain III, AAA+ region region spans residues 118 to 334; the sequence is ELNAKYVFSR…GALTRALAYI (217 aa). ATP contacts are provided by Gly162, Gly164, Lys165, and Thr166. The segment at 335–459 is domain IV, binds dsDNA; sequence SIWGLPMTVA…IKMNSRSRKP (125 aa).

This sequence belongs to the DnaA family. Oligomerizes as a right-handed, spiral filament on DNA at oriC.

The protein localises to the cytoplasm. Its function is as follows. Plays an essential role in the initiation and regulation of chromosomal replication. ATP-DnaA binds to the origin of replication (oriC) to initiate formation of the DNA replication initiation complex once per cell cycle. Binds the DnaA box (a 9 base pair repeat at the origin) and separates the double-stranded (ds)DNA. Forms a right-handed helical filament on oriC DNA; dsDNA binds to the exterior of the filament while single-stranded (ss)DNA is stabiized in the filament's interior. The ATP-DnaA-oriC complex binds and stabilizes one strand of the AT-rich DNA unwinding element (DUE), permitting loading of DNA polymerase. After initiation quickly degrades to an ADP-DnaA complex that is not apt for DNA replication. Binds acidic phospholipids. This chain is Chromosomal replication initiator protein DnaA, found in Nostoc sp. (strain PCC 7120 / SAG 25.82 / UTEX 2576).